A 343-amino-acid chain; its full sequence is Mitochondrial import inner membrane translocase subunit TIM50-A (343 aa).

At 1–57 (MHKIVWFGTLNKSIGYIGKKKTCLLSPCEKICLNSARKTVQRCDKNYSPPKLRRIKN) the chain is on the mitochondrial matrix side. A helical membrane pass occupies residues 58–77 (FYTYSVVLGSLFSIVMWAIY). The Mitochondrial intermembrane segment spans residues 78-343 (KLGKPEEDHR…GRSLRGSSIK (266 aa)). The 144-residue stretch at 135-278 (YIQPPYSLVL…FDLTAFLQLI (144 aa)) folds into the FCP1 homology domain.

The protein belongs to the TIM50 family. As to quaternary structure, component of the TIM23 complex at least composed of Tim23, Tim17 (Tim17a1, Tim17a2 or Tim17b1) and a Tim50. In terms of tissue distribution, exclusively expressed in the testis.

Its subcellular location is the mitochondrion inner membrane. Its function is as follows. Essential component of the TIM23 complex, a complex that mediates the translocation of transit peptide-containing proteins across the mitochondrial inner membrane. This chain is Mitochondrial import inner membrane translocase subunit TIM50-A (ttm3), found in Drosophila melanogaster (Fruit fly).